The primary structure comprises 161 residues: Cyclic pyranopterin monophosphate synthase (161 aa).

Residues 75–77 and 113–114 contribute to the substrate site; these read LCH and ME. Residue Asp-128 is part of the active site.

It belongs to the MoaC family. In terms of assembly, homohexamer; trimer of dimers.

The enzyme catalyses (8S)-3',8-cyclo-7,8-dihydroguanosine 5'-triphosphate = cyclic pyranopterin phosphate + diphosphate. Its pathway is cofactor biosynthesis; molybdopterin biosynthesis. Its function is as follows. Catalyzes the conversion of (8S)-3',8-cyclo-7,8-dihydroguanosine 5'-triphosphate to cyclic pyranopterin monophosphate (cPMP). The protein is Cyclic pyranopterin monophosphate synthase of Salmonella heidelberg (strain SL476).